The sequence spans 37 residues: Large ribosomal subunit protein bL36c (37 aa).

The protein belongs to the bacterial ribosomal protein bL36 family.

It is found in the plastid. The protein resides in the chloroplast. The protein is Large ribosomal subunit protein bL36c of Chloranthus spicatus (Chulantree).